The sequence spans 1031 residues: LRR receptor-like serine/threonine-protein kinase EFR (1031 aa).

Residues 1 to 24 (MKLSFSLVFNALTLLLQVCIFAQA) form the signal peptide. At 25–653 (RFSNETDMQA…LSVRKKVVSG (629 aa)) the chain is on the extracellular side. Residues asparagine 28, asparagine 55, and asparagine 95 are each glycosylated (N-linked (GlcNAc...) asparagine). LRR repeat units follow at residues 98–120 (FLRLLNLADNSFGSTIPQKVGRL), 122–144 (RLQYLNMSYNLLEGRIPSSLSNC), 146–168 (RLSTVDLSSNHLGHGVPSELGSL), 170–193 (KLAILDLSKNNLTGNFPASLGNLT), 194–216 (SLQKLDFAYNQMRGEIPDEVARL), 218–240 (QMVFFQIALNSFSGGFPPALYNI), 242–264 (SLESLSLADNSFSGNLRADFGYL), 267–289 (NLRRLLLGTNQFTGAIPKTLANI), 291–312 (SLERFDISSNYLSGSIPLSFGK), and 315–335 (NLWWLGIRNNSLGNNSSSGLE). Asparagine 127 and asparagine 143 each carry an N-linked (GlcNAc...) asparagine glycan. Asparagine 180 and asparagine 191 each carry an N-linked (GlcNAc...) asparagine glycan. An N-linked (GlcNAc...) asparagine glycan is attached at asparagine 239. Asparagine 288 carries an N-linked (GlcNAc...) asparagine glycan. Asparagine 323, asparagine 329, asparagine 342, and asparagine 366 each carry an N-linked (GlcNAc...) asparagine glycan. LRR repeat units lie at residues 345–368 (QLEYLDVGYNRLGGELPASIANLS), 370–392 (TLTSLFLGQNLISGTIPHDIGNL), 394–416 (SLQELSLETNMLSGELPVSFGKL), 418–440 (NLQVVDLYSNAISGEIPSYFGNM), 442–464 (RLQKLHLNSNSFHGRIPQSLGRC), 466–487 (YLLDLWMDTNRLNGTIPQEILQ), 490–512 (SLAYIDLSNNFLTGHFPEEVGKL), 514–536 (LLVGLGASYNKLSGKMPQAIGGC), 538–560 (SMEFLFMQGNSFDGAIPDISRLV), 561–584 (SLKNVDFSNNNLSGRIPRYLASLP), and 585–597 (SLRNLNLSMNKFE). The N-linked (GlcNAc...) asparagine glycan is linked to asparagine 439. N-linked (GlcNAc...) asparagine glycosylation is present at asparagine 478. Asparagine 571, asparagine 590, and asparagine 608 each carry an N-linked (GlcNAc...) asparagine glycan. Residues 654 to 674 (ICIGIASLLLIIIVASLCWFM) form a helical membrane-spanning segment. Residues 675–1031 (KRKKKNNASD…WMLNTDMHTM (357 aa)) lie on the Cytoplasmic side of the membrane. Residue threonine 709 is modified to Phosphothreonine. Residues 712–1001 (FSSTNLIGSG…ELISIRSKFF (290 aa)) form the Protein kinase domain. Residues 718–726 (IGSGNFGNV) and lysine 741 contribute to the ATP site. Phosphotyrosine occurs at positions 791 and 836. The active-site Proton acceptor is aspartate 849. Tyrosine 897 carries the phosphotyrosine modification. Residues 1005-1020 (TTITESPRDAPQSSPQ) show a composition bias toward polar residues. The interval 1005 to 1031 (TTITESPRDAPQSSPQEWMLNTDMHTM) is disordered.

This sequence belongs to the protein kinase superfamily. Ser/Thr protein kinase family. Binds to Pseudomonas syringae AvrPto1 and (via the kinase and cytoplasmic domains) to hopD2. Interacts with SERK3/BAK1, SERK4/BKK1, SERK1 and SERK2 in a specific ligand-induced manner. Binds to IOS1. Binds to BIK1 in the absence of pathogen elicitor; dissociates upon pathogen-associated molecular pattern (PAMP)-triggered activation. Autophosphorylated after elicitation with elfl18. Autophosphorylation is inhibited by the binding with avrPto1. Phosphorylation at T-836 is required for immune signaling. In terms of processing, polyubiquitinated at the kinase domain mediated by P.syringae AvrPtoB.

It localises to the cell membrane. It is found in the endomembrane system. The catalysed reaction is L-seryl-[protein] + ATP = O-phospho-L-seryl-[protein] + ADP + H(+). It carries out the reaction L-threonyl-[protein] + ATP = O-phospho-L-threonyl-[protein] + ADP + H(+). Its function is as follows. Constitutes the pattern-recognition receptor (PPR) that determines the specific perception of elongation factor Tu (EF-Tu), a potent elicitor of the defense response to pathogen-associated molecular patterns (PAMPs); phosphorylates BIK1 upon elicitation to regulate immune responses such as defense hormone expression (e.g. jasmonic acid (JA) and salicylic acid (SA)). Reduces transformation by Rhizobium radiobacter probably by inducing plant defense during the interaction. Binding to the effector AvrPto1 from P.syringae blocks the downstream plant immune response while interaction with hopD2 decreases the phosphorylation level of EFR upon elf18 treatment. Specific endoplasmic reticulum quality control components (ERD2B, CRT3, UGGT and STT3A) are required for the biogenesis of EFR. The chain is LRR receptor-like serine/threonine-protein kinase EFR from Arabidopsis thaliana (Mouse-ear cress).